The sequence spans 173 residues: Small ribosomal subunit protein uS7 (173 aa).

This sequence belongs to the universal ribosomal protein uS7 family. As to quaternary structure, part of the 30S ribosomal subunit. Contacts proteins S9 and S11.

In terms of biological role, one of the primary rRNA binding proteins, it binds directly to 16S rRNA where it nucleates assembly of the head domain of the 30S subunit. Is located at the subunit interface close to the decoding center, probably blocks exit of the E-site tRNA. In Orientia tsutsugamushi (strain Ikeda) (Rickettsia tsutsugamushi), this protein is Small ribosomal subunit protein uS7.